The primary structure comprises 126 residues: Small ribosomal subunit protein uS13 (126 aa).

A disordered region spans residues 92–126 (HRMGLPVRGQRTRTNARTRRGRRQTVAGKKKAPGK). Over residues 101 to 126 (QRTRTNARTRRGRRQTVAGKKKAPGK) the composition is skewed to basic residues.

This sequence belongs to the universal ribosomal protein uS13 family. Part of the 30S ribosomal subunit. Forms a loose heterodimer with protein S19. Forms two bridges to the 50S subunit in the 70S ribosome.

Its function is as follows. Located at the top of the head of the 30S subunit, it contacts several helices of the 16S rRNA. In the 70S ribosome it contacts the 23S rRNA (bridge B1a) and protein L5 of the 50S subunit (bridge B1b), connecting the 2 subunits; these bridges are implicated in subunit movement. Contacts the tRNAs in the A and P-sites. The chain is Small ribosomal subunit protein uS13 from Nostoc sp. (strain PCC 7120 / SAG 25.82 / UTEX 2576).